A 274-amino-acid polypeptide reads, in one-letter code: NH(3)-dependent NAD(+) synthetase (274 aa).

46–53 (GISGGQDS) contacts ATP. A Mg(2+)-binding site is contributed by Asp52. Arg140 is a deamido-NAD(+) binding site. Thr160 provides a ligand contact to ATP. Mg(2+) is bound at residue Glu165. Lys173 and Asp180 together coordinate deamido-NAD(+). 2 residues coordinate ATP: Lys189 and Thr211. Deamido-NAD(+) is bound at residue 260-261 (HK).

It belongs to the NAD synthetase family. In terms of assembly, homodimer.

It catalyses the reaction deamido-NAD(+) + NH4(+) + ATP = AMP + diphosphate + NAD(+) + H(+). It functions in the pathway cofactor biosynthesis; NAD(+) biosynthesis; NAD(+) from deamido-NAD(+) (ammonia route): step 1/1. Its function is as follows. Catalyzes the ATP-dependent amidation of deamido-NAD to form NAD. Uses ammonia as a nitrogen source. The polypeptide is NH(3)-dependent NAD(+) synthetase (Sodalis glossinidius (strain morsitans)).